Here is a 419-residue protein sequence, read N- to C-terminus: eIF5-mimic protein 1 (419 aa).

Residues 1-22 (MNKHQKPVLTGQRFKTRKRDEK) form a disordered region. The residue at position 117 (K117) is an N6-acetyllysine. Residues 248–415 (VQQSLGTRKE…QNAEEESESE (168 aa)) form the W2 domain. Phosphoserine is present on residues S412 and S414.

The protein belongs to the BZW family. Interacts with EIF3E. Interacts with EIF2S2. Interacts with EIF3C.

The protein resides in the cytoplasm. In terms of biological role, translation initiation regulator which represses non-AUG initiated translation and repeat-associated non-AUG (RAN) initiated translation by acting as a competitive inhibitor of eukaryotic translation initiation factor 5 (EIF5) function. Increases the accuracy of translation initiation by impeding EIF5-dependent translation from non-AUG codons by competing with it for interaction with EIF2S2 within the 43S pre-initiation complex (PIC) in an EIF3C-binding dependent manner. In Homo sapiens (Human), this protein is eIF5-mimic protein 1 (BZW2).